The following is a 432-amino-acid chain: 3-phosphoshikimate 1-carboxyvinyltransferase (432 aa).

Positions 23, 24, and 28 each coordinate 3-phosphoshikimate. Lysine 23 contributes to the phosphoenolpyruvate binding site. 2 residues coordinate phosphoenolpyruvate: glycine 95 and arginine 123. Positions 167, 169, 317, and 344 each coordinate 3-phosphoshikimate. Position 169 (glutamine 169) interacts with phosphoenolpyruvate. Aspartate 317 acts as the Proton acceptor in catalysis. Phosphoenolpyruvate contacts are provided by arginine 348 and arginine 390.

It belongs to the EPSP synthase family. As to quaternary structure, monomer.

It is found in the cytoplasm. It carries out the reaction 3-phosphoshikimate + phosphoenolpyruvate = 5-O-(1-carboxyvinyl)-3-phosphoshikimate + phosphate. The protein operates within metabolic intermediate biosynthesis; chorismate biosynthesis; chorismate from D-erythrose 4-phosphate and phosphoenolpyruvate: step 6/7. Functionally, catalyzes the transfer of the enolpyruvyl moiety of phosphoenolpyruvate (PEP) to the 5-hydroxyl of shikimate-3-phosphate (S3P) to produce enolpyruvyl shikimate-3-phosphate and inorganic phosphate. This chain is 3-phosphoshikimate 1-carboxyvinyltransferase, found in Staphylococcus saprophyticus subsp. saprophyticus (strain ATCC 15305 / DSM 20229 / NCIMB 8711 / NCTC 7292 / S-41).